The primary structure comprises 348 residues: Glucose 1-dehydrogenase 2 (348 aa).

Cysteine 39 contacts Zn(2+). Threonine 41 lines the substrate pocket. Histidine 64 and glutamate 65 together coordinate Zn(2+). 2 residues coordinate substrate: glutamate 110 and glutamate 146. Glutamate 146 is a Zn(2+) binding site. NADP(+) contacts are provided by residues 178–181 (AGPV), 260–262 (LGV), and 289–291 (SVN). Asparagine 291 provides a ligand contact to substrate.

Belongs to the zinc-containing alcohol dehydrogenase family. Glucose 1-dehydrogenase subfamily. Zn(2+) is required as a cofactor.

The enzyme catalyses D-glucose + NAD(+) = D-glucono-1,5-lactone + NADH + H(+). It catalyses the reaction D-glucose + NADP(+) = D-glucono-1,5-lactone + NADPH + H(+). Its function is as follows. Catalyzes the NAD(P)(+)-dependent oxidation of D-glucose to D-gluconate via gluconolactone. Can utilize both NAD(+) and NADP(+) as electron acceptor. Is involved in the degradation of glucose through a non-phosphorylative variant of the Entner-Doudoroff pathway. This Vulcanisaeta moutnovskia (strain 768-28) protein is Glucose 1-dehydrogenase 2.